The chain runs to 257 residues: UPF0246 protein Ssed_1188 (257 aa).

Belongs to the UPF0246 family.

The protein is UPF0246 protein Ssed_1188 of Shewanella sediminis (strain HAW-EB3).